Here is a 130-residue protein sequence, read N- to C-terminus: Protein ApaG (130 aa).

Residues 3-127 form the ApaG domain; that stretch reads KAETRGISVT…FSLDSPHVRR (125 aa).

This Methylobacterium radiotolerans (strain ATCC 27329 / DSM 1819 / JCM 2831 / NBRC 15690 / NCIMB 10815 / 0-1) protein is Protein ApaG.